Consider the following 1333-residue polypeptide: Protein grainyhead (1333 aa).

Disordered regions lie at residues 52-93 (SLSP…DSPQ), 439-598 (LLGS…PGAR), 617-655 (QTSH…GPYI), 727-784 (RFAG…GGAT), and 853-885 (TAVH…DFGR). Over residues 59–68 (GSGGHSGGGN) the composition is skewed to gly residues. Residues 445 to 488 (SSSATVSTTGVVSTTTISHHQQQQQQQQQQQQQQQQQHQQQQQH) show a composition bias toward low complexity. Residues 520-532 (IKREPEDLRKDPK) are compositionally biased toward basic and acidic residues. Composition is skewed to low complexity over residues 533–546 (NGNI…NGPG) and 567–596 (PSTP…GSPG). The span at 626–642 (GAGGGAGPAGAAGGGGV) shows a compositional bias: gly residues. Over residues 749-772 (QQQQQQQQHQQQQQQQQHHQQQQH) the composition is skewed to low complexity. A compositionally biased stretch (polar residues) spans 853 to 877 (TAVHGSQNSPTTSLVDTSTNGSTRS). The Grh/CP2 DB domain maps to 899–1125 (TNVGFRYHLE…DFAKPPVLFS (227 aa)).

It belongs to the grh/CP2 family. Grainyhead subfamily. Restricted, during embryogenesis, to tissues derived from ectoderm, predominantly the central nervous system (CNS) and the epidermis.

It is found in the nucleus. Transcription factor that binds a CNS-specific regulatory element of the Dopa decarboxylase (Ddc) gene. Also interacts with sequences adjacent to other transcription units, including Ultrabithorax (Ubx) and engrailed (en). Activity in vivo may be required only at high levels transiently to activate the expression of Ddc in the CNS. The chain is Protein grainyhead (grh) from Drosophila melanogaster (Fruit fly).